The following is a 489-amino-acid chain: Netrin-5 (489 aa).

The signal sequence occupies residues 1 to 16 (MPVTFALLLLLGQATA). Asn-62 is a glycosylation site (N-linked (GlcNAc...) asparagine). Disulfide bonds link Cys-157/Cys-166, Cys-159/Cys-175, Cys-177/Cys-186, Cys-189/Cys-209, Cys-212/Cys-221, Cys-214/Cys-239, Cys-242/Cys-251, Cys-254/Cys-272, Cys-275/Cys-287, Cys-277/Cys-294, Cys-296/Cys-305, Cys-308/Cys-322, Cys-345/Cys-418, Cys-349/Cys-420, and Cys-364/Cys-475. Laminin EGF-like domains follow at residues 157–211 (CQCH…PCLP), 212–274 (CSCN…ACRA), and 275–324 (CQCH…PCQR). The 131-residue stretch at 345–475 (CQNYCNMSDT…LQQEERAGGC (131 aa)) folds into the NTR domain. Positions 470–489 (ERAGGCRGVRAPTPSPRPEH) are disordered.

The protein localises to the secreted. Plays a role in neurogenesis. Prevents motor neuron cell body migration out of the neural tube. In Homo sapiens (Human), this protein is Netrin-5 (NTN5).